A 136-amino-acid polypeptide reads, in one-letter code: uncharacterized protein (136 aa).

Widely expressed.

This is an uncharacterized protein from Homo sapiens (Human).